The following is a 504-amino-acid chain: Maturase K (504 aa).

This sequence belongs to the intron maturase 2 family. MatK subfamily.

It localises to the plastid. The protein localises to the chloroplast. Usually encoded in the trnK tRNA gene intron. Probably assists in splicing its own and other chloroplast group II introns. This Gossypium turneri (Cotton) protein is Maturase K.